The chain runs to 199 residues: Hematopoietic prostaglandin D synthase (199 aa).

The region spanning 2–79 (PNYKLTYFNM…YLTKNTDLAG (78 aa)) is the GST N-terminal domain. Residues Tyr8, Arg14, Trp39, 49–51 (GKI), and 63–64 (QS) contribute to the glutathione site. Residues 81–199 (TEMEQCHVDA…WIKRRPQTKL (119 aa)) enclose the GST C-terminal domain.

The protein belongs to the GST superfamily. Sigma family. Homodimer. The cofactor is glutathione. As to expression, expressed in a number of megakaryocytic cell lines but not in platelets. Highly expressed in adipose tissue, macrophages and placenta. Also expressed at lower levels in lung, heart, lymph nodes, appendix, bone marrow and fetal liver.

The protein resides in the cytoplasm. The enzyme catalyses prostaglandin H2 = prostaglandin D2. The catalysed reaction is RX + glutathione = an S-substituted glutathione + a halide anion + H(+). It catalyses the reaction 2-glyceryl-prostaglandin H2 = 2-glyceryl-prostaglandin D2. Its activity is regulated as follows. Prostaglandin PGD2 synthesis is stimulated by calcium and magnesium ions. One calcium or magnesium ion is bound between the subunits of the homodimer. The interactions with the protein are for the most part mediated via water molecules. Magnesium increases the affinity for glutathione, while calcium has no effect on the affinity for glutathione. Its function is as follows. Bifunctional enzyme which catalyzes both the conversion of PGH2 to PGD2, a prostaglandin involved in smooth muscle contraction/relaxation and a potent inhibitor of platelet aggregation, and the conjugation of glutathione with a wide range of aryl halides and organic isothiocyanates. Also exhibits low glutathione-peroxidase activity towards cumene hydroperoxide. This Homo sapiens (Human) protein is Hematopoietic prostaglandin D synthase.